Here is a 106-residue protein sequence, read N- to C-terminus: Integration host factor subunit beta (106 aa).

A disordered region spans residues 57–106 (PARAGRNPRTGEHVPVEQKSVPFFKTGKEMRERLNRDGLDGATPPSPPAA). Residues 82 to 95 (TGKEMRERLNRDGL) are compositionally biased toward basic and acidic residues.

It belongs to the bacterial histone-like protein family. In terms of assembly, heterodimer of an alpha and a beta chain.

Functionally, this protein is one of the two subunits of integration host factor, a specific DNA-binding protein that functions in genetic recombination as well as in transcriptional and translational control. This chain is Integration host factor subunit beta, found in Afipia carboxidovorans (strain ATCC 49405 / DSM 1227 / KCTC 32145 / OM5) (Oligotropha carboxidovorans).